A 236-amino-acid polypeptide reads, in one-letter code: Virion protein US10 homolog (236 aa).

Positions 1–32 (MDGAYGHVHNGSPMAVDGEESGAGTGTGAGAD) are disordered. Gly residues predominate over residues 21–31 (SGAGTGTGAGA). Residues 138 to 150 (CAYWCCLGHAFAC) fold into a zinc finger.

This sequence belongs to the herpesviridae US10 family. Phosphorylated.

It localises to the virion tegument. It is found in the host nucleus matrix. In Equine herpesvirus 1 (strain Kentucky A) (EHV-1), this protein is Virion protein US10 homolog (IR5).